The chain runs to 60 residues: uncharacterized protein (60 aa).

A helical membrane pass occupies residues 19–39 (LSIMCGCSIYFLLLVFILTFY).

Its subcellular location is the membrane. This is an uncharacterized protein from Saccharomyces cerevisiae (strain ATCC 204508 / S288c) (Baker's yeast).